Here is a 344-residue protein sequence, read N- to C-terminus: Protein RecA (344 aa).

An ATP-binding site is contributed by 66–73 (GPESSGKT).

It belongs to the RecA family.

It is found in the cytoplasm. Can catalyze the hydrolysis of ATP in the presence of single-stranded DNA, the ATP-dependent uptake of single-stranded DNA by duplex DNA, and the ATP-dependent hybridization of homologous single-stranded DNAs. It interacts with LexA causing its activation and leading to its autocatalytic cleavage. This is Protein RecA from Methylobacillus flagellatus (strain ATCC 51484 / DSM 6875 / VKM B-1610 / KT).